Reading from the N-terminus, the 437-residue chain is Aminopeptidase W (437 aa).

Active-site residues include Cys-70, His-361, and Asn-382.

The protein belongs to the peptidase C1 family.

It is found in the cytoplasm. In Lactobacillus delbrueckii subsp. lactis, this protein is Aminopeptidase W (pepW).